Consider the following 445-residue polypeptide: Eukaryotic peptide chain release factor subunit 1 (445 aa).

This sequence belongs to the eukaryotic release factor 1 family. As to quaternary structure, heterodimer of two subunits, one of which binds GTP.

The protein localises to the cytoplasm. In terms of biological role, directs the termination of nascent peptide synthesis (translation) in response to the termination codon UGA. In Stylonchia UAA and UAG codes for glutamine. The polypeptide is Eukaryotic peptide chain release factor subunit 1 (ERF1) (Stylonychia mytilus (Ciliate)).